Consider the following 209-residue polypeptide: Putative amino acid efflux protein YcgF (209 aa).

Transmembrane regions (helical) follow at residues methionine 1 to valine 21, isoleucine 39 to leucine 59, phenylalanine 62 to tyrosine 82, phenylalanine 110 to isoleucine 130, leucine 147 to isoleucine 167, and leucine 184 to isoleucine 204.

Belongs to the Rht family.

The protein localises to the cell membrane. This chain is Putative amino acid efflux protein YcgF (ycgF), found in Bacillus subtilis (strain 168).